A 98-amino-acid chain; its full sequence is Class II hydrophobin 2 (98 aa).

Residues 1-21 (MFFSRISTIVSMTALFASALA) form the signal peptide. Disulfide bonds link C34/C80, C41/C71, C42/C54, and C81/C92.

Belongs to the cerato-ulmin hydrophobin family.

The protein localises to the secreted. Its subcellular location is the cell wall. Aerial growth, conidiation, and dispersal of filamentous fungi in the environment rely upon a capability of their secreting small amphipathic proteins called hydrophobins (HPBs) with low sequence identity. Class I can self-assemble into an outermost layer of rodlet bundles on aerial cell surfaces, conferring cellular hydrophobicity that supports fungal growth, development and dispersal; whereas Class II form highly ordered films at water-air interfaces through intermolecular interactions but contribute nothing to the rodlet structure. In Botryotinia fuckeliana, hydrophobins are not involved in conferring surface hydrophobicity to conidia and aerial hyphae and their function in sclerotia and fruiting bodies remains to be investigated. The sequence is that of Class II hydrophobin 2 from Botryotinia fuckeliana (strain B05.10) (Noble rot fungus).